The following is a 207-amino-acid chain: MASVSPLAKYKLVFLGDQSVGKTSIITRFMYDKFDTTYQATIGIDFLSKTMYLEDRTVRLQLWDTAGQERFRSLIPSYIRDSSVAVVVYDVANRLSFLNTSKWIEEVRNERAGDVIIVLVGNKTDLVEKRQVSIEEGDSKGREYGVMFIETSAKAGFNIKPLFRKIAAALPGMESYSNTKNEDMVDVNLKPTSNSSQGDQQGGACSC.

16–23 (GDQSVGKT) lines the GTP pocket. The Effector region motif lies at 38–46 (YQATIGIDF). GTP is bound by residues 64-68 (DTAGQ), 122-125 (NKTD), and 152-153 (SA). Residues Cys-205 and Cys-207 are each lipidated (S-geranylgeranyl cysteine). Position 207 is a cysteine methyl ester (Cys-207).

This sequence belongs to the small GTPase superfamily. Rab family.

It localises to the golgi apparatus membrane. Its function is as follows. Protein transport. Regulator of membrane traffic from the Golgi apparatus towards the endoplasmic reticulum (ER). The chain is Ras-related protein RABH1d (RABH1D) from Arabidopsis thaliana (Mouse-ear cress).